A 105-amino-acid chain; its full sequence is Unclassified hydrophobin D (105 aa).

The first 18 residues, 1-18 (MKFYIVLLALAAFAMAEA), serve as a signal peptide directing secretion. Cystine bridges form between cysteine 35–cysteine 86, cysteine 42–cysteine 83, and cysteine 43–cysteine 49.

The protein resides in the secreted. The protein localises to the cell wall. Aerial growth, conidiation, and dispersal of filamentous fungi in the environment rely upon a capability of their secreting small amphipathic proteins called hydrophobins (HPBs) with low sequence identity. Class I can self-assemble into an outermost layer of rodlet bundles on aerial cell surfaces, conferring cellular hydrophobicity that supports fungal growth, development and dispersal; whereas Class II form highly ordered films at water-air interfaces through intermolecular interactions but contribute nothing to the rodlet structure. In P.expansum, hydrophobins contribute to germination, tolerance to cold stress and mycotoxins patulin and citrinin production. The sequence is that of Unclassified hydrophobin D from Penicillium expansum (Blue mold rot fungus).